Consider the following 578-residue polypeptide: NADPH oxidase 4 (578 aa).

Residues 1-16 are Cytoplasmic-facing; sequence MAVSWRSWLANEGVKH. Residues 17 to 37 traverse the membrane as a helical segment; the sequence is LCLFIWLSMNVLLFWKTFLLY. Topologically, residues 38 to 62 are extracellular; that stretch reads NQGPEYHYLHQMLGLGLCLSRASAS. The Ferric oxidoreductase domain occupies 58 to 303; that stretch reads RASASVLNLN…YCAERLYRYI (246 aa). A helical membrane pass occupies residues 63–83; the sequence is VLNLNCSLILLPMCRTLLAYL. Residues 84-103 are Cytoplasmic-facing; sequence RGSQKVPSRRTRRLLDKSRT. A helical membrane pass occupies residues 104 to 124; it reads FHITCGVTICIFSGVHVAAHL. Over 125-154 the chain is Extracellular; sequence VNALNFSVNYSEDFVELNAARYRDEDPRKL. The N-linked (GlcNAc...) asparagine glycan is linked to Asn-133. Residues 155–175 traverse the membrane as a helical segment; that stretch reads LFTTVPGLTGVCMVVVLFLMI. At 176–188 the chain is on the cytoplasmic side; it reads TASTYAIRVSNYD. The chain crosses the membrane as a helical span at residues 189-209; the sequence is IFWYTHNLFFVFYMLLTLHVS. Topologically, residues 210-424 are extracellular; sequence GGLLKYQTNL…SPFEESLNYE (215 aa). The tract at residues 218–273 is E-loop; essential for H2O2 generating catalytic activity; sequence NLDTHPPGCISLNRTSSQNISLPEYFSEHFHEPFPEGFSKPAEFTQHKFVKICMEE. The N-linked (GlcNAc...) asparagine glycan is linked to Asn-230. The mediates interaction with TLR4 stretch occupies residues 248–575; sequence HEPFPEGFSK…YGTRFEYNKE (328 aa). The FAD-binding FR-type domain occupies 304-419; it reads RSNKPVTIIS…DGPFGSPFEE (116 aa). The chain crosses the membrane as a helical span at residues 425-445; sequence VSLCVAGGIGVTPFASILNTL. The Cytoplasmic segment spans residues 446-578; it reads LDDWKPYKLR…RFEYNKESFS (133 aa).

As to quaternary structure, interacts with protein disulfide isomerase. Interacts with, relocalizes and stabilizes CYBA/p22phox. Interacts with TLR4. Interacts with PPP1R15A. Interacts with LRRC8A; this interaction prevents the ubiquitin-mediated degradation of LRRC8A. The cofactor is heme. Post-translationally, deubiquitinated by USP19. In terms of processing, N-glycosylated and glycosylation is required for its proper function. N-glycosylated. As to expression, expressed by distal tubular cells in kidney cortex and in endothelial cells (at protein level). Widely expressed. Strongly expressed in kidney and to a lower extent in heart, adipocytes, hepatoma, endothelial cells, skeletal muscle, brain, several brain tumor cell lines and airway epithelial cells.

The protein localises to the cytoplasm. It localises to the endoplasmic reticulum membrane. Its subcellular location is the cell membrane. The protein resides in the cell junction. It is found in the focal adhesion. The protein localises to the nucleus. It localises to the nucleolus. Its subcellular location is the perinuclear region. It catalyses the reaction NADPH + 2 O2 = 2 superoxide + NADP(+) + H(+). The catalysed reaction is NADPH + O2 + H(+) = H2O2 + NADP(+). Its activity is regulated as follows. Inhibited by plumbagin. Activated by phorbol 12-myristate 13-acetate (PMA). Activated by insulin. Inhibited by diphenylene iodonium. In terms of biological role, NADPH oxidase that catalyzes predominantly the reduction of oxygen to H2O2. Can also catalyze to a smaller extent, the reduction of oxygen to superoxide. May function as an oxygen sensor regulating the KCNK3/TASK-1 potassium channel and HIF1A activity. May regulate insulin signaling cascade. May play a role in apoptosis, bone resorption and lipolysaccharide-mediated activation of NFKB. May produce superoxide in the nucleus and play a role in regulating gene expression upon cell stimulation. Promotes ferroptosis, reactive oxygen species production and reduced glutathione (GSH) levels by activating NLRP3 inflammasome activation and cytokine release. Functionally, NADPH oxidase that catalyzes the generation of superoxide from molecular oxygen utilizing NADPH as an electron donor. Involved in redox signaling in vascular cells. Modulates the nuclear activation of ERK1/2 and the ELK1 transcription factor, and is capable of inducing nuclear DNA damage. Its function is as follows. Lacks superoxide-generating NADPH oxidase activity. The sequence is that of NADPH oxidase 4 (NOX4) from Homo sapiens (Human).